Reading from the N-terminus, the 41-residue chain is Large ribosomal subunit protein bL36 (41 aa).

This sequence belongs to the bacterial ribosomal protein bL36 family.

In Rickettsia prowazekii (strain Madrid E), this protein is Large ribosomal subunit protein bL36.